A 455-amino-acid chain; its full sequence is Bifunctional protein GlmU (455 aa).

The segment at 1 to 228 (MYKCALVLAA…FEETIGVNSR (228 aa)) is pyrophosphorylase. Residues 8–11 (LAAG), lysine 22, glutamine 73, and 78–79 (GT) contribute to the UDP-N-acetyl-alpha-D-glucosamine site. Aspartate 103 is a Mg(2+) binding site. UDP-N-acetyl-alpha-D-glucosamine is bound by residues glycine 140, glutamate 154, asparagine 169, and asparagine 226. Asparagine 226 serves as a coordination point for Mg(2+). The linker stretch occupies residues 229-249 (AQLAQAEEILKDRINLKHMEN). The N-acetyltransferase stretch occupies residues 250–455 (GVTLIDPKTT…GWVDKKGLKK (206 aa)). Residues arginine 331 and lysine 349 each contribute to the UDP-N-acetyl-alpha-D-glucosamine site. Histidine 361 functions as the Proton acceptor in the catalytic mechanism. 2 residues coordinate UDP-N-acetyl-alpha-D-glucosamine: tyrosine 364 and asparagine 375. Residues 384 to 385 (NY), alanine 421, and arginine 438 each bind acetyl-CoA.

This sequence in the N-terminal section; belongs to the N-acetylglucosamine-1-phosphate uridyltransferase family. In the C-terminal section; belongs to the transferase hexapeptide repeat family. In terms of assembly, homotrimer. The cofactor is Mg(2+).

It localises to the cytoplasm. It catalyses the reaction alpha-D-glucosamine 1-phosphate + acetyl-CoA = N-acetyl-alpha-D-glucosamine 1-phosphate + CoA + H(+). The catalysed reaction is N-acetyl-alpha-D-glucosamine 1-phosphate + UTP + H(+) = UDP-N-acetyl-alpha-D-glucosamine + diphosphate. It participates in nucleotide-sugar biosynthesis; UDP-N-acetyl-alpha-D-glucosamine biosynthesis; N-acetyl-alpha-D-glucosamine 1-phosphate from alpha-D-glucosamine 6-phosphate (route II): step 2/2. The protein operates within nucleotide-sugar biosynthesis; UDP-N-acetyl-alpha-D-glucosamine biosynthesis; UDP-N-acetyl-alpha-D-glucosamine from N-acetyl-alpha-D-glucosamine 1-phosphate: step 1/1. It functions in the pathway bacterial outer membrane biogenesis; LPS lipid A biosynthesis. Functionally, catalyzes the last two sequential reactions in the de novo biosynthetic pathway for UDP-N-acetylglucosamine (UDP-GlcNAc). The C-terminal domain catalyzes the transfer of acetyl group from acetyl coenzyme A to glucosamine-1-phosphate (GlcN-1-P) to produce N-acetylglucosamine-1-phosphate (GlcNAc-1-P), which is converted into UDP-GlcNAc by the transfer of uridine 5-monophosphate (from uridine 5-triphosphate), a reaction catalyzed by the N-terminal domain. The protein is Bifunctional protein GlmU of Clostridium botulinum (strain Eklund 17B / Type B).